The chain runs to 64 residues: Large ribosomal subunit protein bL35 (64 aa).

Residues 1–22 form a disordered region; it reads MPKAKTHSGASKRFRRTGTGKI.

The protein belongs to the bacterial ribosomal protein bL35 family.

The sequence is that of Large ribosomal subunit protein bL35 from Mycobacterium tuberculosis (strain ATCC 25177 / H37Ra).